A 137-amino-acid polypeptide reads, in one-letter code: Nucleoside diphosphate kinase (137 aa).

Residues K9, F57, R85, T91, R102, and N112 each contribute to the ATP site. The active-site Pros-phosphohistidine intermediate is H115.

This sequence belongs to the NDK family. As to quaternary structure, homotetramer. Mg(2+) serves as cofactor.

Its subcellular location is the cytoplasm. It catalyses the reaction a 2'-deoxyribonucleoside 5'-diphosphate + ATP = a 2'-deoxyribonucleoside 5'-triphosphate + ADP. It carries out the reaction a ribonucleoside 5'-diphosphate + ATP = a ribonucleoside 5'-triphosphate + ADP. Its function is as follows. Major role in the synthesis of nucleoside triphosphates other than ATP. The ATP gamma phosphate is transferred to the NDP beta phosphate via a ping-pong mechanism, using a phosphorylated active-site intermediate. This chain is Nucleoside diphosphate kinase, found in Desulfotalea psychrophila (strain LSv54 / DSM 12343).